Here is a 433-residue protein sequence, read N- to C-terminus: Oxysterol-binding protein-like protein OBPa (433 aa).

This sequence belongs to the OSBP family.

This chain is Oxysterol-binding protein-like protein OBPa (OBPA), found in Candida albicans (strain SC5314 / ATCC MYA-2876) (Yeast).